We begin with the raw amino-acid sequence, 890 residues long: Translation initiation factor IF-2 (890 aa).

A disordered region spans residues 45 to 304 (LIDHLNQKNS…LQQGFQKPAQ (260 aa)). The segment covering 67–81 (STLNIPGTGGKSKSV) has biased composition (polar residues). Residues 92–217 (VKRDPQEAER…RMAEENKWID (126 aa)) are compositionally biased toward basic and acidic residues. Basic residues predominate over residues 252–266 (GRGRNAKAARPKKGN). Residues 267–280 (KHAESKADREEARA) show a composition bias toward basic and acidic residues. The region spanning 389–558 (PRAPVVTIMG…LLQAEVLELK (170 aa)) is the tr-type G domain. Residues 398 to 405 (GHVDHGKT) are G1. 398-405 (GHVDHGKT) lines the GTP pocket. A G2 region spans residues 423 to 427 (GITQH). The interval 444–447 (DTPG) is G3. GTP is bound by residues 444-448 (DTPGH) and 498-501 (NKID). The G4 stretch occupies residues 498–501 (NKID). The segment at 534-536 (SAK) is G5. Residue K808 is modified to N6-acetyllysine.

The protein belongs to the TRAFAC class translation factor GTPase superfamily. Classic translation factor GTPase family. IF-2 subfamily.

It is found in the cytoplasm. Functionally, one of the essential components for the initiation of protein synthesis. Protects formylmethionyl-tRNA from spontaneous hydrolysis and promotes its binding to the 30S ribosomal subunits. Also involved in the hydrolysis of GTP during the formation of the 70S ribosomal complex. The sequence is that of Translation initiation factor IF-2 from Escherichia coli O81 (strain ED1a).